A 795-amino-acid chain; its full sequence is Outer membrane protein assembly factor BamA (795 aa).

The N-terminal stretch at 1-19 is a signal peptide; sequence MKKLLIASLLFGTTTTVFA. POTRA domains lie at 22 to 89, 90 to 170, 173 to 259, 262 to 341, and 344 to 418; these read FVAK…VVAK, SIIS…INED, AKLA…VNEG, YDLR…VDAG, and LTVR…VKER.

It belongs to the BamA family. As to quaternary structure, part of the Bam complex.

The protein resides in the cell outer membrane. Part of the outer membrane protein assembly complex, which is involved in assembly and insertion of beta-barrel proteins into the outer membrane. This is Outer membrane protein assembly factor BamA from Haemophilus influenzae (strain ATCC 51907 / DSM 11121 / KW20 / Rd).